Here is a 1016-residue protein sequence, read N- to C-terminus: MLPLCSERELNELLARKEEEWRVLQAHRAQLQEAALQAAQNRLEETQGKLQRLQEDFVYNLQVLEERDRELERYDVEFTQARQREEAQQAEASELKIEVAKLKQDLTREARRVGELQHQHQLMLQEHRLELERVHSDKNSELAHQREQNERLEWELERKLKELDGELALQRQELLLEFESKMQRREHEFQLRADDMSNVVLTHELKIKLLNKELQALRDAGARAAESLQKAEAEHVELERKLQERARELQDLEAVKDARIKGLEKKLYSAQLAKKKAEETFRRKHEELDRQAREKDTVLAAVKRAHAEELQTLDAKVLELQFLCETLEGQLRRAECTRAEDAKEKNALTDKFREDAAALKAAWDAQITQMSKETVSKDFQIHTLQEEEMKLKAQVARFQQDIDRYKQQLSLAVERGQSLEREQVQLGLDWQRRCDDIERDQIQKSETLIEGLTKARDQVAAKLQETEKALRQQETLLKAVSLERDQAMETLRTHGLLPGQEAQVPPQQHEGEIRADSPSTEIQRLQEQNAGLRNAVSQMRREMEMLSGHLPPAQPEECSNADPDPKAGGDSTPPDYVLTLEAEMQNLKHKLKALEEQLQSTEEPVKTSVATADPHHGVHSSAAAADAALADQTSTALALRKLGDRVHLLNLLVTQLKRKLRQKPRELVPVQHEVPSEVDQVHLEVLELQKQVAELRKHLKVTPQGEPSSREQLQRQGVADRYPMGMEDQTESPTFPQEGAQPPQTIYVTHLQRKLKDAARKILSLRLEREQLLEMGNRLRAEQGHAKGKPTPCPGPPTSEPQDPQEVPERSLDRGPPLGQLQPYSTTQDPRHTKRRCASEYAGKSQPHSAQVGSKTNTPRGHKAEMASRPAQLSQKQHRIPTETWKPVYQKENRTPKLPQAHEVPEESDHRTHRSSSLASSSLQDIWRLLELGSSPSGVPSQDNSVAECPAPSRPSCFQKVNRSPVPIQKAFAVKGLKMEAQPKATPPRPSKSHPAKPTNCQQQRPSRIRNYNLKD.

The segment at 1-503 (MLPLCSEREL…HGLLPGQEAQ (503 aa)) is centrosomal targeting domain. Coiled coils occupy residues 14–607 (LARK…PVKT), 676–700 (SEVD…KHLK), and 748–775 (VTHL…LLEM). Disordered regions lie at residues 500-519 (QEAQ…DSPS) and 549-573 (HLPP…DSTP). The microtubule binding domain stretch occupies residues 604–1016 (PVKTSVATAD…SRIRNYNLKD (413 aa)). 2 disordered regions span residues 781–921 (AEQG…LASS) and 933–1016 (GSSP…NLKD). 2 stretches are compositionally biased toward polar residues: residues 846–859 (QPHS…TNTP) and 934–945 (SSPSGVPSQDNS).

Interacts with CEP63; the interaction is required for their location to proximal end of centrioles. Interacts with microtubules.

Its subcellular location is the cytoplasm. It localises to the cytoskeleton. The protein localises to the microtubule organizing center. The protein resides in the centrosome. It is found in the centriolar satellite. Its subcellular location is the centriole. It localises to the spindle. Pleiotropic regulator of centriole duplication, mitosis, and ciliogenesis. Critical interface between centrosome and microtubule-mediated cellular processes. Centriole duplication protein required for recruitment of CEP63, CEP152, and PLK4 to the centrosome. Independent of its centrosomal targeting, localizes to and interacts with microtubules and regulates microtubule nucleation, stability, and mitotic progression. This is Coiled-coil domain-containing protein 57 from Mus musculus (Mouse).